A 157-amino-acid chain; its full sequence is Protein-export protein SecB (157 aa).

It belongs to the SecB family. Homotetramer, a dimer of dimers. One homotetramer interacts with 1 SecA dimer.

It localises to the cytoplasm. In terms of biological role, one of the proteins required for the normal export of preproteins out of the cell cytoplasm. It is a molecular chaperone that binds to a subset of precursor proteins, maintaining them in a translocation-competent state. It also specifically binds to its receptor SecA. This Proteus mirabilis (strain HI4320) protein is Protein-export protein SecB.